The primary structure comprises 213 residues: Gas vesicle protein F (213 aa).

This sequence belongs to the gas vesicle GvpF/GvpL family. As to quaternary structure, binds GvpA.

It localises to the gas vesicle. Functionally, a minor component of the gas vesicle, may be involved in preventing GvpA aggregation during gas vesicle nucleation. Gas vesicles are hollow, gas filled proteinaceous nanostructures found in some microorganisms. They allow positioning of halobacteria at the optimal depth for growth in the poorly aerated, shallow brine pools of their habitat. In terms of biological role, expression of a 9.5 kb mc-vac DNA fragment containing 2 divergently transcribed regions (gvpD-gvpE-gvpF-gvpG-gvpH-gvpI-gvpJ-gvpK-gvpL-gvpM and gvpA-gvpC-gvpN-gvpO) allows H.volcanii to produce gas vesicles. This Haloferax mediterranei (strain ATCC 33500 / DSM 1411 / JCM 8866 / NBRC 14739 / NCIMB 2177 / R-4) (Halobacterium mediterranei) protein is Gas vesicle protein F.